We begin with the raw amino-acid sequence, 94 residues long: Co-chaperonin GroES (94 aa).

Belongs to the GroES chaperonin family. As to quaternary structure, heptamer of 7 subunits arranged in a ring. Interacts with the chaperonin GroEL.

It is found in the cytoplasm. In terms of biological role, together with the chaperonin GroEL, plays an essential role in assisting protein folding. The GroEL-GroES system forms a nano-cage that allows encapsulation of the non-native substrate proteins and provides a physical environment optimized to promote and accelerate protein folding. GroES binds to the apical surface of the GroEL ring, thereby capping the opening of the GroEL channel. The protein is Co-chaperonin GroES of Streptococcus agalactiae.